The chain runs to 105 residues: Met repressor (105 aa).

It belongs to the MetJ family. Homodimer.

It is found in the cytoplasm. Functionally, this regulatory protein, when combined with SAM (S-adenosylmethionine) represses the expression of the methionine regulon and of enzymes involved in SAM synthesis. The polypeptide is Met repressor (Klebsiella pneumoniae subsp. pneumoniae (strain ATCC 700721 / MGH 78578)).